The primary structure comprises 1243 residues: Plasma membrane calcium-transporting ATPase 2 (1243 aa).

Polar residues predominate over residues 1–13 (MGDMTNSDFYSKN). The disordered stretch occupies residues 1-24 (MGDMTNSDFYSKNQRNESSHGGEF). At 1 to 94 (MGDMTNSDFY…NFIPPKKPKT (94 aa)) the chain is on the cytoplasmic side. S18 and S27 each carry phosphoserine. Residues 95 to 115 (FLQLVWEALQDVTLIILEIAA) traverse the membrane as a helical segment. Residues 116-152 (IISLGLSFYHPPGESNEGCATAQGGAEDEGEAEAGWI) lie on the Extracellular side of the membrane. Residues 153 to 173 (EGAAILLSVICVVLVTAFNDW) form a helical membrane-spanning segment. Topologically, residues 174 to 390 (SKEKQFRGLQ…KEKSVLQGKL (217 aa)) are cytoplasmic. Basic and acidic residues predominate over residues 296–308 (EEKKDKKGVKKGD). Residues 296-382 (EEKKDKKGVK…KKKANMHKKE (87 aa)) form a disordered region. 2 stretches are compositionally biased toward low complexity: residues 313-330 (PAADGAAPANAAGSANAS) and 337-356 (QDGSADSSQSKAKQQDGAAA). A helical transmembrane segment spans residues 391 to 410 (TKLAVQIGKAGLVMSAITVI). The Extracellular segment spans residues 411-443 (ILVLYFTVDTFVVNKKPWLTECTPVYVQYFVKF). The chain crosses the membrane as a helical span at residues 444–461 (FIIGVTVLVVAVPEGLPL). Residues 462–875 (AVTISLAYSV…MWGRNVYDSI (414 aa)) are Cytoplasmic-facing. Residue D499 is the 4-aspartylphosphate intermediate of the active site. 2 residues coordinate Mg(2+): D820 and D824. A helical transmembrane segment spans residues 876-895 (SKFLQFQLTVNVVAVIVAFT). The Extracellular segment spans residues 896-905 (GACITQDSPL). A helical membrane pass occupies residues 906 to 926 (KAVQMLWVNLIMDTFASLALA). Residues 927–946 (TEPPTETLLLRKPYGRNKPL) are Cytoplasmic-facing. A helical membrane pass occupies residues 947–969 (ISRTMMKNILGHAVYQLTLIFTL). The Extracellular segment spans residues 970-987 (LFVGEKMFQIDSGRNAPL). The helical transmembrane segment at 988-1009 (HSPPSEHYTIIFNTFVMMQLFN) threads the bilayer. Residues 1010–1028 (EINARKIHGERNVFDGIFR) lie on the Cytoplasmic side of the membrane. The helical transmembrane segment at 1029–1050 (NPIFCTIVLGTFAIQIVIVQFG) threads the bilayer. Residues 1051-1060 (GKPFSCSPLQ) lie on the Extracellular side of the membrane. Residues 1061-1082 (LDQWMWCIFIGLGELVWGQVIA) traverse the membrane as a helical segment. Topologically, residues 1083–1243 (TIPTSRLKFL…SPIHSLETSL (161 aa)) are cytoplasmic. 7 positions are modified to phosphoserine: E1107, I1116, D1117, R1121, W1130, F1131, and Q1138. Positions 1123-1140 (LRRGQILWFRGLNRIQTQ) are calmodulin-binding subdomain A. Phosphothreonine; by PKC is present on T1139. The tract at residues 1141–1150 (IRVVKAFRSS) is calmodulin-binding subdomain B. Phosphoserine is present on residues V1144, F1147, R1148, Y1152, R1161, T1162, I1175, and S1178. T1188 is modified (phosphothreonine). Residues 1194 to 1243 (AALKQNSSPPSSLNKNNSAIDSGINLTTDTSKSATSSSPGSPIHSLETSL) are disordered. Composition is skewed to low complexity over residues 1196 to 1211 (LKQNSSPPSSLNKNNS) and 1220 to 1234 (TTDTSKSATSSSPGS). Position 1201 is a phosphoserine; by PKA (S1201). S1211 is modified (phosphoserine).

This sequence belongs to the cation transport ATPase (P-type) (TC 3.A.3) family. Type IIB subfamily. As to quaternary structure, interacts with PDZD11. In terms of tissue distribution, isoforms containing segment B are found in brain, uterus, liver and kidney and in low levels in other tissues. Isoforms containing segment W are found in kidney, uterus, and pancreas. Isoforms containing segment Y are found in pancreas and in low levels in brain and heart. Isoforms containing segment Z are found in brain and heart and isoforms containing segment X are found in low levels in brain. Isoforms containing segment A are found in low levels in heart and small intestine while isoforms containing segment C are found in testis and in low levels in other tissues.

Its subcellular location is the cell membrane. It localises to the synapse. It is found in the apical cell membrane. The protein localises to the basolateral cell membrane. The enzyme catalyses Ca(2+)(in) + ATP + H2O = Ca(2+)(out) + ADP + phosphate + H(+). ATP-driven Ca(2+) ion pump involved in the maintenance of basal intracellular Ca(2+) levels in specialized cells of cerebellar circuit and vestibular and cochlear systems. Uses ATP as an energy source to transport cytosolic Ca(2+) ions across the plasma membrane to the extracellular compartment. Has fast activation and Ca(2+) clearance rate suited to control fast neuronal Ca(2+) dynamics. At parallel fiber to Purkinje neuron synapse, mediates presynaptic Ca(2+) efflux in response to climbing fiber-induced Ca(2+) rise. Provides for fast return of Ca(2+) concentrations back to their resting levels, ultimately contributing to long-term depression induction and motor learning. Plays an essential role in hearing and balance. In cochlear hair cells, shuttles Ca(2+) ions from stereocilia to the endolymph and dissipates Ca(2+) transients generated by the opening of the mechanoelectrical transduction channels. Regulates Ca(2+) levels in the vestibular system, where it contributes to the formation of otoconia. In non-excitable cells, regulates Ca(2+) signaling through spatial control of Ca(2+) ions extrusion and dissipation of Ca(2+) transients generated by store-operated channels. In lactating mammary gland, allows for the high content of Ca(2+) ions in the milk. This is Plasma membrane calcium-transporting ATPase 2 (Atp2b2) from Rattus norvegicus (Rat).